An 847-amino-acid polypeptide reads, in one-letter code: Protein translocase subunit SecA (847 aa).

Residues glutamine 87, 105–109 (GEGKT), and aspartate 495 each bind ATP. The segment at 828 to 847 (SSNSPSDARNRPIEHDDNAV) is disordered. Positions 835–847 (ARNRPIEHDDNAV) are enriched in basic and acidic residues.

The protein belongs to the SecA family. Monomer and homodimer. Part of the essential Sec protein translocation apparatus which comprises SecA, SecYEG and auxiliary proteins SecDF. Other proteins may also be involved.

The protein resides in the cell membrane. Its subcellular location is the cytoplasm. It catalyses the reaction ATP + H2O + cellular proteinSide 1 = ADP + phosphate + cellular proteinSide 2.. In terms of biological role, part of the Sec protein translocase complex. Interacts with the SecYEG preprotein conducting channel. Has a central role in coupling the hydrolysis of ATP to the transfer of proteins into and across the cell membrane, serving as an ATP-driven molecular motor driving the stepwise translocation of polypeptide chains across the membrane. The chain is Protein translocase subunit SecA from Tropheryma whipplei (strain TW08/27) (Whipple's bacillus).